The primary structure comprises 273 residues: Manganese catalase (273 aa).

Glu35 serves as a coordination point for Mn(2+). Positions 57 and 61 each coordinate Ca(2+). Residues Glu66, His69, Glu149, and His182 each coordinate Mn(2+). 3 residues coordinate Ca(2+): Asn220, Ser222, and Gly224. Residues 254–273 (EKPELKPAPPFVHNTLPGRE) are disordered.

This sequence belongs to the manganese catalase family. Ca(2+) serves as cofactor. Requires Mn(2+) as cofactor.

It catalyses the reaction 2 H2O2 = O2 + 2 H2O. Its function is as follows. Catalyzes the decomposition of hydrogen peroxide into water and oxygen. The protein is Manganese catalase (ydbD) of Bacillus subtilis (strain 168).